The primary structure comprises 184 residues: Probable type 3 secretion system regulator AscH (184 aa).

Residues 1–25 (MKIEGSDQLGGEQPQRQPLPPESMA) are disordered.

Belongs to the YopR family.

It localises to the secreted. Functionally, may be involved in the regulation of the assembly of the type III secretion system (T3SS), also called injectisome, which is used to inject bacterial effector proteins into eukaryotic host cells. May control the polymerization of the needle. This is Probable type 3 secretion system regulator AscH from Aeromonas salmonicida subsp. salmonicida.